A 160-amino-acid polypeptide reads, in one-letter code: MNPLAAIELDLAYLGPDPLGEDRWVELLSSWLAQLQAELPSPLKADAYSLGLQFCDDAAIAELNGQWRQQPKPTDVLSFAAQEDAPEPLEGLPIELGDIVISIPTAERQAPEHGHSLQQELLFLASHGLLHLLGWDHPDEASLAAMLSRQDALVQGAAAH.

His127, His131, and His137 together coordinate Zn(2+).

This sequence belongs to the endoribonuclease YbeY family. Zn(2+) serves as cofactor.

It localises to the cytoplasm. Single strand-specific metallo-endoribonuclease involved in late-stage 70S ribosome quality control and in maturation of the 3' terminus of the 16S rRNA. The sequence is that of Endoribonuclease YbeY from Synechococcus sp. (strain RCC307).